A 452-amino-acid polypeptide reads, in one-letter code: Bifunctional protein GlmU (452 aa).

The pyrophosphorylase stretch occupies residues 1–233 (MTDRPFAALI…AWEVAGVNSR (233 aa)). Residues 11 to 14 (LAAG), K25, Q76, 81 to 82 (GT), 104 to 106 (YGD), G144, E159, N174, and N231 each bind UDP-N-acetyl-alpha-D-glucosamine. D106 is a binding site for Mg(2+). Position 231 (N231) interacts with Mg(2+). A linker region spans residues 234 to 254 (AELAAVEAEWQRRRRLAAMAD). The N-acetyltransferase stretch occupies residues 255 to 452 (GATLIAPETV…AMKIKKAARK (198 aa)). Residues R320 and K338 each contribute to the UDP-N-acetyl-alpha-D-glucosamine site. H350 serves as the catalytic Proton acceptor. UDP-N-acetyl-alpha-D-glucosamine-binding residues include Y353 and N364. Residues A367, 373–374 (NY), S392, A410, and R427 each bind acetyl-CoA.

This sequence in the N-terminal section; belongs to the N-acetylglucosamine-1-phosphate uridyltransferase family. It in the C-terminal section; belongs to the transferase hexapeptide repeat family. Homotrimer. Mg(2+) is required as a cofactor.

The protein localises to the cytoplasm. The enzyme catalyses alpha-D-glucosamine 1-phosphate + acetyl-CoA = N-acetyl-alpha-D-glucosamine 1-phosphate + CoA + H(+). It catalyses the reaction N-acetyl-alpha-D-glucosamine 1-phosphate + UTP + H(+) = UDP-N-acetyl-alpha-D-glucosamine + diphosphate. Its pathway is nucleotide-sugar biosynthesis; UDP-N-acetyl-alpha-D-glucosamine biosynthesis; N-acetyl-alpha-D-glucosamine 1-phosphate from alpha-D-glucosamine 6-phosphate (route II): step 2/2. The protein operates within nucleotide-sugar biosynthesis; UDP-N-acetyl-alpha-D-glucosamine biosynthesis; UDP-N-acetyl-alpha-D-glucosamine from N-acetyl-alpha-D-glucosamine 1-phosphate: step 1/1. It participates in bacterial outer membrane biogenesis; LPS lipid A biosynthesis. Its function is as follows. Catalyzes the last two sequential reactions in the de novo biosynthetic pathway for UDP-N-acetylglucosamine (UDP-GlcNAc). The C-terminal domain catalyzes the transfer of acetyl group from acetyl coenzyme A to glucosamine-1-phosphate (GlcN-1-P) to produce N-acetylglucosamine-1-phosphate (GlcNAc-1-P), which is converted into UDP-GlcNAc by the transfer of uridine 5-monophosphate (from uridine 5-triphosphate), a reaction catalyzed by the N-terminal domain. The chain is Bifunctional protein GlmU from Rhizorhabdus wittichii (strain DSM 6014 / CCUG 31198 / JCM 15750 / NBRC 105917 / EY 4224 / RW1) (Sphingomonas wittichii).